The primary structure comprises 453 residues: Bifunctional protein GlmU (453 aa).

The pyrophosphorylase stretch occupies residues 1-226; sequence MAFSVVILAA…EIEVEGINNR (226 aa). UDP-N-acetyl-alpha-D-glucosamine is bound by residues 8 to 11, Lys22, Gln73, and 78 to 79; these read LAAG and GT. Asp102 contributes to the Mg(2+) binding site. UDP-N-acetyl-alpha-D-glucosamine is bound by residues Gly137, Glu151, Asn166, and Asn224. Asn224 is a binding site for Mg(2+). The segment at 227–247 is linker; sequence KQLAAIERAFQFEQAQELMMQ. Residues 248 to 453 form an N-acetyltransferase region; the sequence is GVSLLDPHRF…SGWQRPTKPE (206 aa). Arg330 and Lys348 together coordinate UDP-N-acetyl-alpha-D-glucosamine. His360 functions as the Proton acceptor in the catalytic mechanism. Positions 363 and 374 each coordinate UDP-N-acetyl-alpha-D-glucosamine. Acetyl-CoA is bound by residues Ala377, 383–384, Ser402, Ala420, and Arg437; that span reads NY.

The protein in the N-terminal section; belongs to the N-acetylglucosamine-1-phosphate uridyltransferase family. This sequence in the C-terminal section; belongs to the transferase hexapeptide repeat family. In terms of assembly, homotrimer. It depends on Mg(2+) as a cofactor.

Its subcellular location is the cytoplasm. The catalysed reaction is alpha-D-glucosamine 1-phosphate + acetyl-CoA = N-acetyl-alpha-D-glucosamine 1-phosphate + CoA + H(+). The enzyme catalyses N-acetyl-alpha-D-glucosamine 1-phosphate + UTP + H(+) = UDP-N-acetyl-alpha-D-glucosamine + diphosphate. The protein operates within nucleotide-sugar biosynthesis; UDP-N-acetyl-alpha-D-glucosamine biosynthesis; N-acetyl-alpha-D-glucosamine 1-phosphate from alpha-D-glucosamine 6-phosphate (route II): step 2/2. It functions in the pathway nucleotide-sugar biosynthesis; UDP-N-acetyl-alpha-D-glucosamine biosynthesis; UDP-N-acetyl-alpha-D-glucosamine from N-acetyl-alpha-D-glucosamine 1-phosphate: step 1/1. Its pathway is bacterial outer membrane biogenesis; LPS lipid A biosynthesis. Catalyzes the last two sequential reactions in the de novo biosynthetic pathway for UDP-N-acetylglucosamine (UDP-GlcNAc). The C-terminal domain catalyzes the transfer of acetyl group from acetyl coenzyme A to glucosamine-1-phosphate (GlcN-1-P) to produce N-acetylglucosamine-1-phosphate (GlcNAc-1-P), which is converted into UDP-GlcNAc by the transfer of uridine 5-monophosphate (from uridine 5-triphosphate), a reaction catalyzed by the N-terminal domain. In Pseudoalteromonas atlantica (strain T6c / ATCC BAA-1087), this protein is Bifunctional protein GlmU.